A 150-amino-acid chain; its full sequence is Arginine repressor (150 aa).

This sequence belongs to the ArgR family.

It localises to the cytoplasm. The protein operates within amino-acid biosynthesis; L-arginine biosynthesis [regulation]. Regulates arginine biosynthesis genes. In Symbiobacterium thermophilum (strain DSM 24528 / JCM 14929 / IAM 14863 / T), this protein is Arginine repressor.